The primary structure comprises 140 residues: MSWDSYLDNLVAQSKDASGTAHVDRCCIIGLDGGAAWTTAGHACALKLQGQEGPNIAKCFKSKDFTAFMSGGVRAEGEKYQFLREEEGKTVLAKKKGNGAITLQASKTAIVLGHCPEGGQQGNTNKAVGVIADYLESLGM.

This sequence belongs to the profilin family. In terms of assembly, occurs in many kinds of cells as a complex with monomeric actin in a 1:1 ratio.

Its function is as follows. Binds to actin and affects the structure of the cytoskeleton. At high concentrations, profilin prevents the polymerization of actin, whereas it enhances it at low concentrations. By binding to PIP2, it inhibits the formation of IP3 and DG. This is Profilin from Suberites domuncula (Sponge).